A 243-amino-acid polypeptide reads, in one-letter code: Urease accessory protein UreF 2 (243 aa).

Belongs to the UreF family. As to quaternary structure, ureD, UreF and UreG form a complex that acts as a GTP-hydrolysis-dependent molecular chaperone, activating the urease apoprotein by helping to assemble the nickel containing metallocenter of UreC. The UreE protein probably delivers the nickel.

It localises to the cytoplasm. Required for maturation of urease via the functional incorporation of the urease nickel metallocenter. The protein is Urease accessory protein UreF 2 of Brucella suis (strain ATCC 23445 / NCTC 10510).